The following is a 458-amino-acid chain: Opine oxidase subunit A (458 aa).

This sequence to T-protein and to dimethylglycine dehydrogenase. In terms of assembly, heterodimer of a subunit A and a subunit B.

The protein operates within opine metabolism; octopine degradation. In terms of biological role, oxidative cleavage of octopine into L-arginine and pyruvate. In Rhizobium meliloti (strain 1021) (Ensifer meliloti), this protein is Opine oxidase subunit A (ooxA).